Here is a 543-residue protein sequence, read N- to C-terminus: Hydroxylamine reductase (543 aa).

[4Fe-4S] cluster contacts are provided by C5, C8, C17, and C23. 8 residues coordinate hybrid [4Fe-2O-2S] cluster: H236, E260, C304, C398, C426, C451, E486, and K488. Cysteine persulfide is present on C398.

Belongs to the HCP family. [4Fe-4S] cluster serves as cofactor. Hybrid [4Fe-2O-2S] cluster is required as a cofactor.

It is found in the cytoplasm. It carries out the reaction A + NH4(+) + H2O = hydroxylamine + AH2 + H(+). Catalyzes the reduction of hydroxylamine to form NH(3) and H(2)O. The sequence is that of Hydroxylamine reductase from Bacteroides fragilis (strain ATCC 25285 / DSM 2151 / CCUG 4856 / JCM 11019 / LMG 10263 / NCTC 9343 / Onslow / VPI 2553 / EN-2).